We begin with the raw amino-acid sequence, 84 residues long: Small ribosomal subunit protein uS17 (84 aa).

This sequence belongs to the universal ribosomal protein uS17 family. In terms of assembly, part of the 30S ribosomal subunit.

One of the primary rRNA binding proteins, it binds specifically to the 5'-end of 16S ribosomal RNA. This chain is Small ribosomal subunit protein uS17, found in Clostridium beijerinckii (strain ATCC 51743 / NCIMB 8052) (Clostridium acetobutylicum).